We begin with the raw amino-acid sequence, 428 residues long: 3-phosphoshikimate 1-carboxyvinyltransferase (428 aa).

Residues Lys22, Ser23, and Arg27 each contribute to the 3-phosphoshikimate site. Residue Lys22 participates in phosphoenolpyruvate binding. The phosphoenolpyruvate site is built by Gly98 and Arg126. 3-phosphoshikimate-binding residues include Ser172, Ser173, Gln174, Ser200, Asp316, Asn339, and Lys343. Gln174 is a binding site for phosphoenolpyruvate. The active-site Proton acceptor is the Asp316. Positions 347, 389, and 414 each coordinate phosphoenolpyruvate.

Belongs to the EPSP synthase family. As to quaternary structure, monomer.

The protein localises to the cytoplasm. The enzyme catalyses 3-phosphoshikimate + phosphoenolpyruvate = 5-O-(1-carboxyvinyl)-3-phosphoshikimate + phosphate. It functions in the pathway metabolic intermediate biosynthesis; chorismate biosynthesis; chorismate from D-erythrose 4-phosphate and phosphoenolpyruvate: step 6/7. In terms of biological role, catalyzes the transfer of the enolpyruvyl moiety of phosphoenolpyruvate (PEP) to the 5-hydroxyl of shikimate-3-phosphate (S3P) to produce enolpyruvyl shikimate-3-phosphate and inorganic phosphate. This chain is 3-phosphoshikimate 1-carboxyvinyltransferase, found in Psychromonas ingrahamii (strain DSM 17664 / CCUG 51855 / 37).